Reading from the N-terminus, the 329-residue chain is Transmembrane protein I329L (329 aa).

The N-terminal stretch at 1-31 (MLRVFIFFVFLGSGLAGRIKPQITCKYFISE) is a signal peptide. Asparagine 32, asparagine 39, asparagine 44, asparagine 76, asparagine 82, and asparagine 101 each carry an N-linked (GlcNAc...) asparagine; by host glycan. Topologically, residues 32–239 (NNTWYKYNVT…NTERYKNCYP (208 aa)) are extracellular. Residues 112-133 (ELKFLDLRYNNLQFIDYNILRK) form an LRR repeat. N-linked (GlcNAc...) asparagine; by host glycosylation is found at asparagine 185 and asparagine 219. The cysteines at positions 195 and 237 are disulfide-linked. A helical transmembrane segment spans residues 240-260 (FVLVSILCSCISFLFLIICLL). Residues 261–329 (RSICKKYSCT…EKKASCSRRK (69 aa)) lie on the Cytoplasmic side of the membrane.

This sequence belongs to the asfivirus I329L family. Highly glycosylated.

The protein localises to the host endoplasmic reticulum membrane. It is found in the host Golgi apparatus membrane. Its function is as follows. Viral TLR3 homolog that probably prevents TLR3 dimerization and subsequent induction of IFN. Inhibits dsRNA-stimulated activation of NF-kB and IRF3. This is Transmembrane protein I329L from Ornithodoros (relapsing fever ticks).